A 254-amino-acid chain; its full sequence is Small ribosomal subunit protein mS40 (254 aa).

Residues 1-33 (MAAPLRHTLLKLVPTLLRSSYVAQVPLQTLCTR) constitute a mitochondrion transit peptide. S47 carries the phosphoserine modification. Residues 218–254 (YQGNLLEESGPPPESMPEMPTTPPAESSIEQPGSQSA) are disordered. A compositionally biased stretch (pro residues) spans 227-240 (GPPPESMPEMPTTP).

This sequence belongs to the bacterial ribosomal protein bS18 family. Mitochondrion-specific ribosomal protein mS40 subfamily. Component of the mitochondrial ribosome small subunit (28S) which comprises a 12S rRNA and about 30 distinct proteins.

The protein localises to the mitochondrion. The protein is Small ribosomal subunit protein mS40 (Mrps18b) of Mus musculus (Mouse).